The following is a 68-amino-acid chain: DNA-directed RNA polymerase subunit omega (68 aa).

Belongs to the RNA polymerase subunit omega family. The RNAP catalytic core consists of 2 alpha, 1 beta, 1 beta' and 1 omega subunit. When a sigma factor is associated with the core the holoenzyme is formed, which can initiate transcription.

It catalyses the reaction RNA(n) + a ribonucleoside 5'-triphosphate = RNA(n+1) + diphosphate. Its function is as follows. Promotes RNA polymerase assembly. Latches the N- and C-terminal regions of the beta' subunit thereby facilitating its interaction with the beta and alpha subunits. This chain is DNA-directed RNA polymerase subunit omega, found in Nitrosospira multiformis (strain ATCC 25196 / NCIMB 11849 / C 71).